The chain runs to 157 residues: Arginine repressor (157 aa).

The protein belongs to the ArgR family.

It is found in the cytoplasm. It participates in amino-acid biosynthesis; L-arginine biosynthesis [regulation]. Functionally, regulates arginine biosynthesis genes. The polypeptide is Arginine repressor (Colwellia psychrerythraea (strain 34H / ATCC BAA-681) (Vibrio psychroerythus)).